Reading from the N-terminus, the 361-residue chain is uncharacterized protein (361 aa).

Residue 33–40 participates in ATP binding; that stretch reads GPINSGKT.

This sequence belongs to the archaeal ATPase family.

This is an uncharacterized protein from Methanocaldococcus jannaschii (strain ATCC 43067 / DSM 2661 / JAL-1 / JCM 10045 / NBRC 100440) (Methanococcus jannaschii).